The chain runs to 92 residues: Larval cuticle protein 9 (92 aa).

Residues 1–16 (MKFVIVLACLLAVVFA) form the signal peptide. Residues 31–92 (LLDFNYAYEL…TGYHPKVVEA (62 aa)) form the Chitin-binding type R&amp;R domain.

In terms of biological role, component of the cuticle of the larva. The protein is Larval cuticle protein 9 (Lcp9) of Drosophila melanogaster (Fruit fly).